A 667-amino-acid polypeptide reads, in one-letter code: Acetolactate synthase 1, chloroplastic (667 aa).

The span at 1–35 (MAAAAPSPSSSAFSKTLSPSSSTSSTLLPRSTFPF) shows a compositional bias: low complexity. Residues 1–45 (MAAAAPSPSSSAFSKTLSPSSSTSSTLLPRSTFPFPHHPHKTTPP) form a disordered region. Residues 1-94 (MAAAAPSPSS…VSRFAPDEPR (94 aa)) constitute a chloroplast transit peptide. Residue E141 participates in thiamine diphosphate binding. Residues C161 and C307 are joined by a disulfide bond. FAD-binding positions include R243, 349 to 370 (HGTV…FGVR), and 392 to 411 (DIDS…ICAD). Residues 484–564 (QHQMWAAQYY…VKIMLLNNQH (81 aa)) form a thiamine pyrophosphate binding region. Mg(2+)-binding residues include D535 and N562.

It belongs to the TPP enzyme family. Mg(2+) is required as a cofactor. Requires thiamine diphosphate as cofactor.

The protein localises to the plastid. It localises to the chloroplast. The catalysed reaction is 2 pyruvate + H(+) = (2S)-2-acetolactate + CO2. The protein operates within amino-acid biosynthesis; L-isoleucine biosynthesis; L-isoleucine from 2-oxobutanoate: step 1/4. Its pathway is amino-acid biosynthesis; L-valine biosynthesis; L-valine from pyruvate: step 1/4. In Nicotiana tabacum (Common tobacco), this protein is Acetolactate synthase 1, chloroplastic (ALS SURA).